Reading from the N-terminus, the 325-residue chain is Holliday junction branch migration complex subunit RuvB (325 aa).

The large ATPase domain (RuvB-L) stretch occupies residues 1 to 180 (MKNQLLDAKV…FGIHLKLNFY (180 aa)). ATP contacts are provided by residues leucine 19, arginine 20, glycine 61, lysine 64, threonine 65, serine 66, 127–129 (EDF), arginine 170, tyrosine 180, and arginine 217. Threonine 65 serves as a coordination point for Mg(2+). The segment at 181–251 (SCEELTQIVE…ITDYALNQLG (71 aa)) is small ATPAse domain (RuvB-S). The segment at 254 to 325 (KLGLDSSDHK…ITANALKHLH (72 aa)) is head domain (RuvB-H). Residues arginine 290, arginine 309, and arginine 314 each coordinate DNA.

It belongs to the RuvB family. In terms of assembly, homohexamer. Forms an RuvA(8)-RuvB(12)-Holliday junction (HJ) complex. HJ DNA is sandwiched between 2 RuvA tetramers; dsDNA enters through RuvA and exits via RuvB. An RuvB hexamer assembles on each DNA strand where it exits the tetramer. Each RuvB hexamer is contacted by two RuvA subunits (via domain III) on 2 adjacent RuvB subunits; this complex drives branch migration. In the full resolvosome a probable DNA-RuvA(4)-RuvB(12)-RuvC(2) complex forms which resolves the HJ.

It is found in the cytoplasm. It catalyses the reaction ATP + H2O = ADP + phosphate + H(+). Its function is as follows. The RuvA-RuvB-RuvC complex processes Holliday junction (HJ) DNA during genetic recombination and DNA repair, while the RuvA-RuvB complex plays an important role in the rescue of blocked DNA replication forks via replication fork reversal (RFR). RuvA specifically binds to HJ cruciform DNA, conferring on it an open structure. The RuvB hexamer acts as an ATP-dependent pump, pulling dsDNA into and through the RuvAB complex. RuvB forms 2 homohexamers on either side of HJ DNA bound by 1 or 2 RuvA tetramers; 4 subunits per hexamer contact DNA at a time. Coordinated motions by a converter formed by DNA-disengaged RuvB subunits stimulates ATP hydrolysis and nucleotide exchange. Immobilization of the converter enables RuvB to convert the ATP-contained energy into a lever motion, pulling 2 nucleotides of DNA out of the RuvA tetramer per ATP hydrolyzed, thus driving DNA branch migration. The RuvB motors rotate together with the DNA substrate, which together with the progressing nucleotide cycle form the mechanistic basis for DNA recombination by continuous HJ branch migration. Branch migration allows RuvC to scan DNA until it finds its consensus sequence, where it cleaves and resolves cruciform DNA. The polypeptide is Holliday junction branch migration complex subunit RuvB (Orientia tsutsugamushi (strain Boryong) (Rickettsia tsutsugamushi)).